Consider the following 195-residue polypeptide: Thymidylate kinase (195 aa).

7–14 (GVDTCGKS) contacts ATP.

Belongs to the thymidylate kinase family.

The catalysed reaction is dTMP + ATP = dTDP + ADP. Phosphorylation of dTMP to form dTDP in both de novo and salvage pathways of dTTP synthesis. The protein is Thymidylate kinase of Helicobacter hepaticus (strain ATCC 51449 / 3B1).